The primary structure comprises 477 residues: Ribulose bisphosphate carboxylase large chain (477 aa).

Residues 1–2 (MS) constitute a propeptide that is removed on maturation. P3 is modified (N-acetylproline). N6,N6,N6-trimethyllysine is present on K14. Positions 123 and 173 each coordinate substrate. The active-site Proton acceptor is K175. K177 contacts substrate. Positions 201, 203, and 204 each coordinate Mg(2+). An N6-carboxylysine modification is found at K201. The active-site Proton acceptor is the H294. Substrate is bound by residues R295, H327, and S379.

It belongs to the RuBisCO large chain family. Type I subfamily. As to quaternary structure, heterohexadecamer of 8 large chains and 8 small chains; disulfide-linked. The disulfide link is formed within the large subunit homodimers. Mg(2+) serves as cofactor. The disulfide bond which can form in the large chain dimeric partners within the hexadecamer appears to be associated with oxidative stress and protein turnover.

It is found in the plastid. Its subcellular location is the chloroplast. It catalyses the reaction 2 (2R)-3-phosphoglycerate + 2 H(+) = D-ribulose 1,5-bisphosphate + CO2 + H2O. The enzyme catalyses D-ribulose 1,5-bisphosphate + O2 = 2-phosphoglycolate + (2R)-3-phosphoglycerate + 2 H(+). In terms of biological role, ruBisCO catalyzes two reactions: the carboxylation of D-ribulose 1,5-bisphosphate, the primary event in carbon dioxide fixation, as well as the oxidative fragmentation of the pentose substrate in the photorespiration process. Both reactions occur simultaneously and in competition at the same active site. This is Ribulose bisphosphate carboxylase large chain (rbcL) from Solanum tuberosum (Potato).